A 734-amino-acid polypeptide reads, in one-letter code: MAAAAAIAAALLRRSTSSQHHRRILLLPLLSHLQRAAPRSPSPWDPPPHHRFFFSSDVTAEGDSKPRPPLDGKQLWREVSTSEPATGASRLPKATWDAVVALLRRFGKDPAMSDQALALYIPASAFPTYARRFRHFLPARLSLESAEHLLSLPADDAHALLLPAFAEFCVTHLADELRKHESVMAAADLTAPHAWYPFARAMRRRVVYHCGPTNSGKTHNALTRFAAAKSGVYCSPLRLLAMEVFDKVNALGVYCSLRTGQEIKEVPFSNHVACTIEMLSTEEPYEVAVVDEIQMMADPVRGYAWTRAVLGLKADEIHLCGDPSVLKIVRKICADTGDDLEVHQYERFKPLVVEAKTLLGDLKNVRSGDCIVAFSRREIFEVKLAIEKFTKHKCCVIYGALPPETRRQQAKLFNEQDNEYDVLVASDAVGMGLNLNIRRVVFYSLAKYNGDRMVPVAASQVKQIAGRAGRRGSIYPDGLTTTFLLDDLDYLIQCLQQPFEEAKKVGLFPCFEQVESFAIQFPDLTFNELLDKFRENCRVDSTYFMCHQESIKKVANMLERIQGLSLKDRYNFCFAPVNIRDPKAMYHLLRFATNYSQSRRVSIAMGMPKGSAKNDTELLDLETKHQVLSMYLWLSHHFEEDHFPHVQKAEEMSINIADLLAKSLAKASWKPTSRQQAKPRRENEEDNDVEQASDDNAKNDSEDGYERSISRIKPFMRKRLDRPSQDPSSLNFVA.

A mitochondrion-targeting transit peptide spans 1–60 (MAAAAAIAAALLRRSTSSQHHRRILLLPLLSHLQRAAPRSPSPWDPPPHHRFFFSSDVTA). Residues 58–88 (VTAEGDSKPRPPLDGKQLWREVSTSEPATGA) are disordered. A compositionally biased stretch (basic and acidic residues) spans 62–76 (GDSKPRPPLDGKQLW). The Helicase ATP-binding domain maps to 198-356 (FARAMRRRVV…RFKPLVVEAK (159 aa)). An ATP-binding site is contributed by 211–218 (GPTNSGKT). Positions 357-525 (TLLGDLKNVR…SFAIQFPDLT (169 aa)) constitute a Helicase C-terminal domain. Residues Asn-594 and Asn-614 are each glycosylated (N-linked (GlcNAc...) asparagine). The disordered stretch occupies residues 667 to 734 (ASWKPTSRQQ…QDPSSLNFVA (68 aa)). Residues 684–693 (EEDNDVEQAS) are compositionally biased toward acidic residues. The segment covering 695 to 709 (DNAKNDSEDGYERSI) has biased composition (basic and acidic residues). A glycan (N-linked (GlcNAc...) asparagine) is linked at Asn-699. Polar residues predominate over residues 725-734 (QDPSSLNFVA).

Belongs to the helicase family. As to quaternary structure, homodimer; in free form. Component of the mitochondrial degradosome (mtEXO) complex which is a heteropentamer containing 2 copies of SUPV3L1 and 3 copies of PNPT1. Requires Mg(2+) as cofactor. Mn(2+) serves as cofactor.

Its subcellular location is the nucleus. The protein resides in the mitochondrion matrix. The protein localises to the mitochondrion nucleoid. The catalysed reaction is ATP + H2O = ADP + phosphate + H(+). Its function is as follows. Major helicase player in mitochondrial RNA metabolism. Component of the mitochondrial degradosome (mtEXO) complex, that degrades 3' overhang double-stranded RNA with a 3'-to-5' directionality in an ATP-dependent manner. ATPase and ATP-dependent multisubstrate helicase, able to unwind double-stranded (ds) DNA and RNA, and RNA/DNA heteroduplexes in the 5'-to-3' direction. Plays a role in the RNA surveillance system in mitochondria; regulates the stability of mature mRNAs, the removal of aberrantly formed mRNAs and the rapid degradation of non coding processing intermediates. Confers salinity and drought stress tolerances by maintaining both photosynthesis and antioxidant machinery, probably via an increase in plant hormones levels such as gibberellic acid (GA(3)), the cytokinin zeatin (Z) and indole-3-acetic acid (IAA). The protein is ATP-dependent RNA helicase SUV3L, mitochondrial of Oryza sativa subsp. japonica (Rice).